The primary structure comprises 229 residues: Cilia- and flagella-associated protein 95 (229 aa).

Residues Met1–Gly123 are Extracellular-facing. Asn75 carries N-linked (GlcNAc...) asparagine glycosylation. A helical transmembrane segment spans residues Ile124 to Phe140. Residues Pro141 to Ile229 are Cytoplasmic-facing. Positions Leu153–Pro163 are mn.

In terms of assembly, microtubule inner protein component of sperm flagellar doublet microtubules. Interacts with MYH9. Interacts with MYH10. In terms of tissue distribution, expressed in undifferentiated embryonic stem cells. Expressed in airway epithelial cells.

The protein localises to the cytoplasm. Its subcellular location is the cytoskeleton. It localises to the cilium axoneme. The protein resides in the flagellum axoneme. It is found in the cell membrane. Its function is as follows. Microtubule inner protein (MIP) part of the dynein-decorated doublet microtubules (DMTs) in cilia axoneme, which is required for motile cilia beating. This Homo sapiens (Human) protein is Cilia- and flagella-associated protein 95.